The primary structure comprises 33 residues: Photosystem II reaction center protein T (33 aa).

The helical transmembrane segment at 3-23 (ALVYTFLLVSTLGIIFFAIFF) threads the bilayer.

This sequence belongs to the PsbT family. In terms of assembly, PSII is composed of 1 copy each of membrane proteins PsbA, PsbB, PsbC, PsbD, PsbE, PsbF, PsbH, PsbI, PsbJ, PsbK, PsbL, PsbM, PsbT, PsbY, PsbZ, Psb30/Ycf12, at least 3 peripheral proteins of the oxygen-evolving complex and a large number of cofactors. It forms dimeric complexes.

It is found in the plastid. It localises to the chloroplast thylakoid membrane. In terms of biological role, found at the monomer-monomer interface of the photosystem II (PS II) dimer, plays a role in assembly and dimerization of PSII. PSII is a light-driven water plastoquinone oxidoreductase, using light energy to abstract electrons from H(2)O, generating a proton gradient subsequently used for ATP formation. The chain is Photosystem II reaction center protein T from Helianthus annuus (Common sunflower).